A 156-amino-acid polypeptide reads, in one-letter code: 6,7-dimethyl-8-ribityllumazine synthase (156 aa).

5-amino-6-(D-ribitylamino)uracil is bound by residues Phe22, 57-59, and 81-83; these read AYE and TVI. A (2S)-2-hydroxy-3-oxobutyl phosphate-binding site is contributed by 86 to 87; that stretch reads GT. Catalysis depends on His89, which acts as the Proton donor. Phe114 contacts 5-amino-6-(D-ribitylamino)uracil. Arg128 contacts (2S)-2-hydroxy-3-oxobutyl phosphate.

Belongs to the DMRL synthase family. Forms an icosahedral capsid composed of 60 subunits, arranged as a dodecamer of pentamers.

It carries out the reaction (2S)-2-hydroxy-3-oxobutyl phosphate + 5-amino-6-(D-ribitylamino)uracil = 6,7-dimethyl-8-(1-D-ribityl)lumazine + phosphate + 2 H2O + H(+). Its pathway is cofactor biosynthesis; riboflavin biosynthesis; riboflavin from 2-hydroxy-3-oxobutyl phosphate and 5-amino-6-(D-ribitylamino)uracil: step 1/2. In terms of biological role, catalyzes the formation of 6,7-dimethyl-8-ribityllumazine by condensation of 5-amino-6-(D-ribitylamino)uracil with 3,4-dihydroxy-2-butanone 4-phosphate. This is the penultimate step in the biosynthesis of riboflavin. The protein is 6,7-dimethyl-8-ribityllumazine synthase of Erwinia tasmaniensis (strain DSM 17950 / CFBP 7177 / CIP 109463 / NCPPB 4357 / Et1/99).